Consider the following 573-residue polypeptide: MWTFLGIATFTYFYKKCGDVTLANKELLLCVLVFLSLGLVLSYRCRHRNGGLLGRHQSGSQFAAFSDILSALPLIGFFWAKSPPESEKKEQLESKRRRKEVNLSETTLTGAATSVSTSSVTDPEVIIIGSGVLGSALATVLSRDGRTVTVIERDLKEPDRILGECLQPGGYRVLRELGLGDTVESLNAHHIHGYVIHDCESRSEVQIPYPVSENNQVQSGVAFHHGKFIMSLRKAAMAEPNVKFIEGVVLRLLEEDDAVIGVQYKDKETGDTKELHAPLTVVADGLFSKFRKNLISNKVSVSSHFVGFIMKDAPQFKANFAELVLVDPSPVLIYQISPSETRVLVDIRGELPRNLREYMTEQIYPQIPDHLKESFLEACQNARLRTMPASFLPPSSVNKRGVLLLGDAYNLRHPLTGGGMTVALKDIKIWRQLLKDIPDLYDDAAIFQAKKSFFWSRKRSHSFVVNVLAQALYELFSATDDSLRQLRKACFLYFKLGGECLTGPVGLLSILSPDPLLLIRHFFSVAVYATYFCFKSEPWATKPRALFSSGAILYKACSIIFPLIYSEMKYLVH.

Residues 1 to 19 (MWTFLGIATFTYFYKKCGD) are Cytoplasmic-facing. The segment at 1–99 (MWTFLGIATF…EQLESKRRRK (99 aa)) is interaction with MARCHF6. An intramembrane segment occupies 20–40 (VTLANKELLLCVLVFLSLGLV). Over 41–573 (LSYRCRHRNG…IYSEMKYLVH (533 aa)) the chain is Cytoplasmic. Residues 61–72 (QFAAFSDILSAL) form a required for degradation in response to high membrane cholesterol levels region. A sufficient for catalytic activity region spans residues 100 to 573 (EVNLSETTLT…IYSEMKYLVH (474 aa)). Residues 132-133 (VL), 152-153 (ER), R160, R233, V249, D407, and M420 each bind FAD. Positions 515–573 (PLLLIRHFFSVAVYATYFCFKSEPWATKPRALFSSGAILYKACSIIFPLIYSEMKYLVH) are hydrophobic; mediates interaction with membranes.

The protein belongs to the squalene monooxygenase family. As to quaternary structure, interacts (via N-terminal domain) with MARCHF6. Interacts with SMIM22; this interaction modulates lipid droplet formation. The cofactor is FAD. Post-translationally, ubiquitinated by MARCHF6 in response to high cholesterol levels in intracellular membranes, leading to proteasomal degradation. Detected in lever (at protein level).

The protein localises to the microsome membrane. The protein resides in the endoplasmic reticulum membrane. The catalysed reaction is squalene + reduced [NADPH--hemoprotein reductase] + O2 = (S)-2,3-epoxysqualene + oxidized [NADPH--hemoprotein reductase] + H2O + H(+). It functions in the pathway terpene metabolism; lanosterol biosynthesis; lanosterol from farnesyl diphosphate: step 2/3. Inhibited by NB-598 ((E)N-ethyl-N-(6,6-dimethyl-2-hepten-4-ynyl)-3-[(3,3'-bi-thiophen-5-yl)methoxy]benzene-methanamine). Contrary to fungal enzymes, the mammalian enzyme is only slightly inhibited by terbinafine. Its function is as follows. Catalyzes the stereospecific oxidation of squalene to (S)-2,3-epoxysqualene, and is considered to be a rate-limiting enzyme in steroid biosynthesis. This is Squalene monooxygenase (Sqle) from Rattus norvegicus (Rat).